Reading from the N-terminus, the 310-residue chain is Olfactory receptor 5P1 (310 aa).

At 1-25 the chain is on the extracellular side; sequence MEPGNHTAVTKFILLGLTDDPTLCV. N-linked (GlcNAc...) asparagine glycosylation is present at Asn5. A helical transmembrane segment spans residues 26 to 46; it reads IFFVFFLGIYIVTLVGNISII. Residues 47–54 lie on the Cytoplasmic side of the membrane; it reads NLVRSCPQ. A helical transmembrane segment spans residues 55–75; sequence LQTPMYMFLSHLAFVDIGYST. At 76–99 the chain is on the extracellular side; that stretch reads SVTPIMLIGFIVHETGLPVHACEA. Cysteines 97 and 189 form a disulfide. Residues 100–120 traverse the membrane as a helical segment; the sequence is QLCSVVTFGTAECFLLAAMAY. Over 121-133 the chain is Cytoplasmic; sequence DRYVAICSPLLYS. The helical transmembrane segment at 134-154 threads the bilayer; it reads THMSSQICLLLVGASYVGGCV. Over 155 to 196 the chain is Extracellular; sequence NAWTFTGCLLSLSFCGPNKIDHFFCDFSPLLKLSCSDVSIIG. A helical transmembrane segment spans residues 197 to 217; sequence IIPSISAGSIIVVTVFVISVS. Over 218 to 237 the chain is Cytoplasmic; that stretch reads YIYILITILKMRSTEGRHKA. A helical transmembrane segment spans residues 238-258; that stretch reads FSTCTSHLTAVTLYYGTITFI. Over 259-271 the chain is Extracellular; sequence YVMPKSSYSTKQN. The helical transmembrane segment at 272 to 292 threads the bilayer; the sequence is RVVSLFYTVVIPMLNPLIYSL. The Cytoplasmic portion of the chain corresponds to 293 to 310; that stretch reads RNRDVKEALRKATLRIYS.

Belongs to the G-protein coupled receptor 1 family.

The protein resides in the cell membrane. In terms of biological role, potential odorant receptor. The polypeptide is Olfactory receptor 5P1 (Mus musculus (Mouse)).